The chain runs to 358 residues: tRNA-specific 2-thiouridylase MnmA (358 aa).

Residues 6–13 (LVSGGVDS) and Ile32 each bind ATP. The interaction with target base in tRNA stretch occupies residues 93 to 95 (NPD). The Nucleophile role is filled by Cys98. Cys98 and Cys193 are joined by a disulfide. Gly121 provides a ligand contact to ATP. Residues 143-145 (KDQ) form an interaction with tRNA region. The active-site Cysteine persulfide intermediate is Cys193.

Belongs to the MnmA/TRMU family.

It localises to the cytoplasm. The catalysed reaction is S-sulfanyl-L-cysteinyl-[protein] + uridine(34) in tRNA + AH2 + ATP = 2-thiouridine(34) in tRNA + L-cysteinyl-[protein] + A + AMP + diphosphate + H(+). Functionally, catalyzes the 2-thiolation of uridine at the wobble position (U34) of tRNA, leading to the formation of s(2)U34. The sequence is that of tRNA-specific 2-thiouridylase MnmA from Parabacteroides distasonis (strain ATCC 8503 / DSM 20701 / CIP 104284 / JCM 5825 / NCTC 11152).